The sequence spans 180 residues: Ribulose bisphosphate carboxylase small subunit, chloroplastic (180 aa).

A chloroplast-targeting transit peptide spans 1-56; it reads MASSVLSSAAVATRSNVAQANMVAPFTGLKSAASFPVSRKQNLDITSIASNGGRVQ.

It belongs to the RuBisCO small chain family. As to quaternary structure, heterohexadecamer of 8 large and 8 small subunits. In terms of assembly, (Microbial infection) Binds to tobamovirus movement protein at the plasmodesmata (e.g. tomato mosaic virus MP AC P69513); this interaction seems required for viral systemic movement.

Its subcellular location is the plastid. It is found in the chloroplast. The protein localises to the cell junction. The protein resides in the plasmodesma. Its function is as follows. RuBisCO catalyzes two reactions: the carboxylation of D-ribulose 1,5-bisphosphate, the primary event in carbon dioxide fixation, as well as the oxidative fragmentation of the pentose substrate. Both reactions occur simultaneously and in competition at the same active site. Although the small subunit is not catalytic it is essential for maximal activity. Involved in antiviral defenses. Functionally, (Microbial infection) Required for tobamovirus movement (e.g. tobacco mosaic virus (TMV)). This is Ribulose bisphosphate carboxylase small subunit, chloroplastic from Nicotiana benthamiana.